Reading from the N-terminus, the 512-residue chain is Monocarboxylate transporter 10 (512 aa).

The disordered stretch occupies residues 1 to 44 (MVPSQEEPAAERETNEAQPPGPAPSDDAPLPGPGPSDVSDVAAE). Residues 1-63 (MVPSQEEPAA…AGSEPPVPPE (63 aa)) are Cytoplasmic-facing. The chain crosses the membrane as a helical span at residues 64–84 (GGWGWLVMLAAMWCNGSVFGI). Over 85–111 (QNAYGVLFVSMLDTFKAKDDDNMAFKT) the chain is Extracellular. Residues 112 to 132 (AWVGSLSMGMIFFCCPIVSVF) traverse the membrane as a helical segment. At 133-141 (TDMFGCRRT) the chain is on the cytoplasmic side. The helical transmembrane segment at 142–162 (AVVGAAVGFIGLMSSSFVSSI) threads the bilayer. Over 163–168 (EPLYLT) the chain is Extracellular. The chain crosses the membrane as a helical span at residues 169–189 (YGIIFACGCSFAYQPSLVILG). Residues 190–201 (HYFKKRLGLVNG) lie on the Cytoplasmic side of the membrane. A helical transmembrane segment spans residues 202–222 (IVTAGSSVFTILLPLLLGNLI). The Extracellular portion of the chain corresponds to 223–232 (SSVKLFNTLR). A helical transmembrane segment spans residues 233–253 (ILCIFMFVLFLAGFTYRPLVP). Residues 254–291 (STKEKESGGSRSSFFSRRKLSPPKKVFNFALFKETTYA) are Cytoplasmic-facing. At Ser260 the chain carries Phosphoserine. A helical membrane pass occupies residues 292-312 (VWAAGIPLALFGYFVPYVHLM). Over 313-326 (NHVKERFQDVNNKE) the chain is Extracellular. A helical membrane pass occupies residues 327-347 (VLFMCIGITSGVGRLLFGRIA). Residues 348 to 362 (DYLPGVKKVYLQVLS) are Cytoplasmic-facing. Residues 363–383 (FFFIGLMSMMIPLCSAFGALI) form a helical membrane-spanning segment. Residue Ala384 is a topological domain, extracellular. A helical membrane pass occupies residues 385-405 (VCLAMGLFDGCFISIMAPIAF). The Cytoplasmic segment spans residues 406 to 416 (ELVGPQDASQA). The helical transmembrane segment at 417–437 (IGFLLGFMSIPMTVGPPIAGL) threads the bilayer. Over 438-448 (LHDKLGTYDVA) the chain is Extracellular. The helical transmembrane segment at 449–469 (FYLAGIPPFVGGVVLCLIPWI) threads the bilayer. The Cytoplasmic portion of the chain corresponds to 470-512 (HSKKQRKISKNAGGEKMEKMLENQSSLLSGSSGIFKKDSASII). Phosphoserine occurs at positions 495, 498, 500, and 501.

It belongs to the major facilitator superfamily. Monocarboxylate porter (TC 2.A.1.13) family. Not N-glycosylated. As to expression, highly expressed in small intestine, particularly in jejunum and ileum, scarcely in colon and substantially in kidney, liver and skeletal muscle. In the brain expression is low and appears to be restricted to a subset of neurons, microglia cells, and oligodendrocytes.

It localises to the cell membrane. The protein resides in the basolateral cell membrane. The catalysed reaction is L-tryptophan(in) = L-tryptophan(out). The enzyme catalyses L-tyrosine(in) = L-tyrosine(out). It carries out the reaction L-phenylalanine(in) = L-phenylalanine(out). It catalyses the reaction 3,3',5-triiodo-L-thyronine(out) = 3,3',5-triiodo-L-thyronine(in). The catalysed reaction is L-thyroxine(out) = L-thyroxine(in). Functionally, sodium- and proton-independent thyroid hormones and aromatic acids transporter. Mediates both uptake and efflux of 3,5,3'-triiodothyronine (T3) and 3,5,3',5'-tetraiodothyronine (T4) with high affinity, suggesting a role in the homeostasis of thyroid hormone levels. Responsible for low affinity bidirectional transport of the aromatic amino acids, such as phenylalanine, tyrosine, tryptophan and L-3,4-dihydroxyphenylalanine (L-dopa). Plays an important role in homeostasis of aromatic amino acids. This chain is Monocarboxylate transporter 10 (Slc16a10), found in Mus musculus (Mouse).